Reading from the N-terminus, the 154-residue chain is Large ribosomal subunit protein uL13 (154 aa).

The protein belongs to the universal ribosomal protein uL13 family. In terms of assembly, part of the 50S ribosomal subunit.

Functionally, this protein is one of the early assembly proteins of the 50S ribosomal subunit, although it is not seen to bind rRNA by itself. It is important during the early stages of 50S assembly. This chain is Large ribosomal subunit protein uL13, found in Rhodopseudomonas palustris (strain BisB5).